Consider the following 312-residue polypeptide: Glyoxylate/hydroxypyruvate reductase A (312 aa).

The active site involves arginine 227. Histidine 275 acts as the Proton donor in catalysis.

Belongs to the D-isomer specific 2-hydroxyacid dehydrogenase family. GhrA subfamily.

It localises to the cytoplasm. It carries out the reaction glycolate + NADP(+) = glyoxylate + NADPH + H(+). It catalyses the reaction (R)-glycerate + NAD(+) = 3-hydroxypyruvate + NADH + H(+). The enzyme catalyses (R)-glycerate + NADP(+) = 3-hydroxypyruvate + NADPH + H(+). Its function is as follows. Catalyzes the NADPH-dependent reduction of glyoxylate and hydroxypyruvate into glycolate and glycerate, respectively. This chain is Glyoxylate/hydroxypyruvate reductase A, found in Salmonella paratyphi B (strain ATCC BAA-1250 / SPB7).